Reading from the N-terminus, the 148-residue chain is Translation initiation factor 2 subunit beta (148 aa).

Belongs to the eIF-2-beta/eIF-5 family. As to quaternary structure, heterotrimer composed of an alpha, a beta and a gamma chain.

Its function is as follows. eIF-2 functions in the early steps of protein synthesis by forming a ternary complex with GTP and initiator tRNA. The protein is Translation initiation factor 2 subunit beta (eif2b) of Aeropyrum pernix (strain ATCC 700893 / DSM 11879 / JCM 9820 / NBRC 100138 / K1).